The chain runs to 181 residues: Translation initiation factor IF-3 (181 aa).

Belongs to the IF-3 family. In terms of assembly, monomer.

The protein resides in the cytoplasm. In terms of biological role, IF-3 binds to the 30S ribosomal subunit and shifts the equilibrium between 70S ribosomes and their 50S and 30S subunits in favor of the free subunits, thus enhancing the availability of 30S subunits on which protein synthesis initiation begins. The chain is Translation initiation factor IF-3 from Pseudoalteromonas translucida (strain TAC 125).